A 275-amino-acid chain; its full sequence is T-cell ecto-ADP-ribosyltransferase 2 (275 aa).

Residues 1 to 20 (MPSNICKFFLTWWLIQQVTG) form the signal peptide. 2 disulfide bridges follow: Cys41–Cys243 and Cys141–Cys193. The TR mART core domain maps to 61–238 (AKLKVAWEEA…IFLDSPKRKK (178 aa)). Positions 98, 146, and 164 each coordinate NAD(+). Arg146 is an active-site residue. Residue Ser167 is part of the active site. Ser202 contacts NAD(+). Arg204 carries the ADP-ribosylarginine; by autocatalysis modification. Glu209 is an active-site residue. Ser246 carries GPI-anchor amidated serine lipidation. Residues 247 to 275 (SAGARESCVSLFLVVLPSLLVQLLCLAEP) constitute a propeptide, removed in mature form.

It belongs to the Arg-specific ADP-ribosyltransferase family. As to expression, postthymic T-cells.

It localises to the cell membrane. It catalyses the reaction L-arginyl-[protein] + NAD(+) = N(omega)-(ADP-D-ribosyl)-L-arginyl-[protein] + nicotinamide + H(+). The enzyme catalyses NAD(+) + H2O = ADP-D-ribose + nicotinamide + H(+). In terms of biological role, has both NAD(+) glycohydrolase and ADP-ribosyltransferase activity (to a lesser extent). This chain is T-cell ecto-ADP-ribosyltransferase 2 (Art2b), found in Rattus norvegicus (Rat).